Reading from the N-terminus, the 438-residue chain is Polycomb protein eed-A (438 aa).

A disordered region spans residues 1–67 (MSEASGRAAG…NAPGRKAWGK (67 aa)). Residues 40–57 (SIESGTNTERPDTPTNAA) are compositionally biased toward polar residues. 7 WD repeats span residues 88–131 (DHNQ…DIRL), 139–182 (DADE…CIKH), 185–225 (GHGN…LVAI), 231–270 (GHRD…MKTA), 301–338 (IHRN…DDID), 356–396 (SQCD…PHKA), and 405–438 (KCAS…DRLR).

The protein belongs to the WD repeat ESC family. In terms of assembly, component of the prc2/eed-ezh2 complex. Interacts with yy1. Can interact with ezh2, hdac1 and taf9.

The protein localises to the nucleus. Polycomb group (PcG) protein. Component of the prc2/eed-ezh2 complex, which methylates 'Lys-9' and 'Lys-27' of histone H3, leading to transcriptional repression of the affected target gene. This is Polycomb protein eed-A (eed-a) from Xenopus laevis (African clawed frog).